Here is a 463-residue protein sequence, read N- to C-terminus: Chromosomal replication initiator protein DnaA (463 aa).

Positions 1–83 are domain I, interacts with DnaA modulators; sequence MSTNQIILTD…LQLFQHYNNT (83 aa). The tract at residues 83–124 is domain II; that stretch reads TIKSIEIITKELPGTTQTVTELPTKTFADIGSSELNSENIFS. The domain III, AAA+ region stretch occupies residues 125 to 343; the sequence is TLDARFTFDN…GALNKVIAHS (219 aa). ATP is bound by residues Gly-171, Gly-173, Lys-174, and Thr-175. A domain IV, binds dsDNA region spans residues 344-463; sequence NFTLKEITLE…INLLMKILQN (120 aa).

The protein belongs to the DnaA family. Oligomerizes as a right-handed, spiral filament on DNA at oriC.

It localises to the cytoplasm. In terms of biological role, plays an essential role in the initiation and regulation of chromosomal replication. ATP-DnaA binds to the origin of replication (oriC) to initiate formation of the DNA replication initiation complex once per cell cycle. Binds the DnaA box (a 9 base pair repeat at the origin) and separates the double-stranded (ds)DNA. Forms a right-handed helical filament on oriC DNA; dsDNA binds to the exterior of the filament while single-stranded (ss)DNA is stabiized in the filament's interior. The ATP-DnaA-oriC complex binds and stabilizes one strand of the AT-rich DNA unwinding element (DUE), permitting loading of DNA polymerase. After initiation quickly degrades to an ADP-DnaA complex that is not apt for DNA replication. Binds acidic phospholipids. The sequence is that of Chromosomal replication initiator protein DnaA from Rickettsia peacockii (strain Rustic).